The primary structure comprises 283 residues: SNF1-related protein kinase regulatory subunit beta-1 (283 aa).

A compositionally biased stretch (basic and acidic residues) spans 1–10; that stretch reads MGNANGKDED. The segment at 1-63 is disordered; it reads MGNANGKDED…PARSPSPFLF (63 aa). Glycine 2 carries the N-myristoyl glycine lipid modification. Positions 43 to 60 are enriched in low complexity; the sequence is SDSMSSSPPGSPARSPSP. The interval 101–178 is kinase-interacting sequence (KIS); that stretch reads PTIITWNQGG…VGNVCNILDV (78 aa). The interval 215 to 283 is association with SNF1 complex (ASC); the sequence is EPLAVPPQLH…TVVLYKPLTR (69 aa).

It belongs to the 5'-AMP-activated protein kinase beta subunit family. Subunit of a probable heterotrimeric complex consisting of an alpha catalytic (KIN10 or KIN11) subunit, and a beta (KINB) and a gamma (KING or SNF4) non-catalytic regulatory subunits. Interacts with SNF4 and CBL1. Interacts with FLZ1, FLZ2, FLZ8, FLZ9, FLZ10, FLZ12, FLZ13, FLZ14 and FLZ15. Post-translationally, sumoylated by SIZ1. Expressed in vegetative organs and, to lower extent, in reproductive organs.

The protein localises to the cell membrane. Regulatory subunit of the probable trimeric SNF1-related protein kinase (SnRK) complex, which may play a role in a signal transduction cascade regulating gene expression and carbohydrate metabolism in higher plants. The SnRK complex may also be involved in the regulation of fatty acid synthesis by phosphorylation of acetyl-CoA carboxylase and in assimilation of nitrogen by phosphorylating nitrate reductase. The sequence is that of SNF1-related protein kinase regulatory subunit beta-1 (KINB1) from Arabidopsis thaliana (Mouse-ear cress).